Here is a 210-residue protein sequence, read N- to C-terminus: Ribonuclease HII (210 aa).

Positions 18 to 210 (GLIAGVDEVG…FKPVKALLGL (193 aa)) constitute an RNase H type-2 domain. Residues Asp-24, Glu-25, and Asp-116 each contribute to the a divalent metal cation site.

The protein belongs to the RNase HII family. Mn(2+) is required as a cofactor. It depends on Mg(2+) as a cofactor.

The protein resides in the cytoplasm. The catalysed reaction is Endonucleolytic cleavage to 5'-phosphomonoester.. In terms of biological role, endonuclease that specifically degrades the RNA of RNA-DNA hybrids. The sequence is that of Ribonuclease HII from Shewanella baltica (strain OS155 / ATCC BAA-1091).